The primary structure comprises 611 residues: Serine/arginine repetitive matrix protein 4 (611 aa).

Disordered stretches follow at residues 38–248 (ARKP…PLQM) and 263–611 (SAAD…STRR). Basic residues-rich tracts occupy residues 107 to 123 (RGKK…RRRS) and 131 to 189 (VKKK…HRCP). A compositionally biased stretch (low complexity) spans 190–202 (SRSQSSESRPSSC). Basic and acidic residues predominate over residues 203–216 (ESRHRGRSPEEGQK). Residues 217 to 226 (SRRRHSRRCS) are compositionally biased toward basic residues. Over residues 270 to 290 (KTASPLTTSRGRSQEYDSGND) the composition is skewed to polar residues. Positions 291 to 301 (TSSPPSTQTSS) are enriched in low complexity. Positions 322–341 (LNSGNTSDSGNSFTTSSPQN) are enriched in polar residues. 2 stretches are compositionally biased toward low complexity: residues 390–422 (SRSS…SRST) and 430–461 (SRSP…SRYS). Basic and acidic residues predominate over residues 462–482 (PSRERDPKYSEKDSQQRERER). Positions 483–498 (ARRRRRSYSPMRKRRR) are enriched in basic residues. A compositionally biased stretch (basic and acidic residues) spans 499 to 508 (DSPSHLEARR). Low complexity predominate over residues 522–549 (PSPSSSGSLSSTSSWYSSSSSRSASRSY). The segment covering 550-564 (SRSRSRSRSRRRSRT) has biased composition (basic residues). A compositionally biased stretch (low complexity) spans 565 to 580 (RTSSSSSSRSPSPGSR). Residues 581 to 595 (SRSRSRSRSRSRSRS) show a composition bias toward basic residues. Residues 596–611 (QSRSYSSADSYSSTRR) show a composition bias toward low complexity.

It belongs to the nSR100 family. In terms of processing, phosphorylated. Specifically expressed in neuronal cells (at protein level). Expressed in the cerebellum.

Its subcellular location is the nucleus. In terms of biological role, splicing factor specifically required for neural cell differentiation. Acts in conjunction with nPTB/PTBP2 by binding directly to its regulated target transcripts and promotes neural-specific exon inclusion in many genes that function in neural cell differentiation. Required to promote the inclusion of neural-specific exon 10 in nPTB/PTBP2, leading to increased expression of neural-specific nPTB/PTBP2. Also promotes the inclusion of exon 16 in DAAM1 in neuron extracts. Promotes alternative splicing of REST transcripts to produce REST isoform 3 (REST4) with greatly reduced repressive activity, thereby activating expression of REST targets in neural cells. Plays an important role during embryonic development as well as in the proper functioning of the adult nervous system. Regulates alternative splicing events in genes with important neuronal functions. The sequence is that of Serine/arginine repetitive matrix protein 4 (SRRM4) from Homo sapiens (Human).